Consider the following 863-residue polypeptide: DNA mismatch repair protein MutS 2 (863 aa).

626 to 633 (GPNMSGKS) provides a ligand contact to ATP.

The protein belongs to the DNA mismatch repair MutS family.

Functionally, this protein is involved in the repair of mismatches in DNA. It is possible that it carries out the mismatch recognition step. This protein has a weak ATPase activity. This Halobacterium salinarum (strain ATCC 700922 / JCM 11081 / NRC-1) (Halobacterium halobium) protein is DNA mismatch repair protein MutS 2 (mutS2).